A 936-amino-acid polypeptide reads, in one-letter code: Protocadherin alpha-5 (936 aa).

The signal sequence occupies residues 1-28; that stretch reads MVYSRRGSLGSRLLLLWLLLAYWKAGSG. Residues 29–696 are Extracellular-facing; that stretch reads QLHYSIPEEA…GPEAALVDVN (668 aa). Cadherin domains lie at 33-132, 156-241, 242-349, 350-454, 455-564, and 580-677; these read SIPE…PPRF, ASDL…APEF, DKSI…TPEM, AITT…LRAF, AQPQ…APAL, and VPRS…APKA. N-linked (GlcNAc...) asparagine glycosylation is found at Asn-264, Asn-448, and Asn-547. A helical membrane pass occupies residues 697 to 717; that stretch reads VYLIIAICAVSSLLVLTLLLY. The Cytoplasmic portion of the chain corresponds to 718–936; it reads TALRCSAQPT…GNSTTDNSDQ (219 aa). Disordered regions lie at residues 759–793, 815–875, and 887–936; these read SGEA…PDWR, RAGP…DKFI, and QEPA…NSDQ. PXXP repeat units follow at residues 773–776, 785–788, 818–821, 873–876, and 877–890; these read PSLP, PRQP, PGGP, KFII, and PGSP…QEPA. Residues 773-890 are 5 X 4 AA repeats of P-X-X-P; it reads PSLPQGPTST…AIISIRQEPA (118 aa). Residues 774–786 show a composition bias toward polar residues; sequence SLPQGPTSTDNPR. The span at 895–909 shows a compositional bias: basic and acidic residues; the sequence is DKSDFITFGKKEETK.

It localises to the cell membrane. Its function is as follows. Potential calcium-dependent cell-adhesion protein. May be involved in the establishment and maintenance of specific neuronal connections in the brain. This is Protocadherin alpha-5 (PCDHA5) from Pan troglodytes (Chimpanzee).